A 262-amino-acid polypeptide reads, in one-letter code: Global transcriptional regulator CodY (262 aa).

Positions 1-159 are GAF domain; sequence MAHLLEKTRK…ASTVVGIQLL (159 aa). A DNA-binding region (H-T-H motif) is located at residues 207–226; it reads ASVIADRIGITRSVIVNALR.

It belongs to the CodY family.

It is found in the cytoplasm. Functionally, DNA-binding global transcriptional regulator which is involved in the adaptive response to starvation and acts by directly or indirectly controlling the expression of numerous genes in response to nutrient availability. During rapid exponential growth, CodY is highly active and represses genes whose products allow adaptation to nutrient depletion. In Streptococcus pneumoniae serotype 4 (strain ATCC BAA-334 / TIGR4), this protein is Global transcriptional regulator CodY.